The sequence spans 841 residues: Toll-like receptor 4 (841 aa).

The first 23 residues, 1 to 23 (MMARVRLAAALIPATAILSCLRT), serve as a signal peptide directing secretion. Residues 24–632 (ESWDPCVQVV…FRNATCQMSK (609 aa)) are Extracellular-facing. A disulfide bridge links C29 with C40. N35 and N73 each carry an N-linked (GlcNAc...) asparagine glycan. LRR repeat units lie at residues 55–76 (STKM…NFSS), 79–100 (ELQV…TFQG), 103–124 (HLST…AFSG), 127–148 (SLQK…PIGH), 151–172 (TLKE…EYFS), 176–197 (NLEH…DVKV), and 205–225 (NLSL…TFKE). N-linked (GlcNAc...) asparagine glycosylation is found at N205, N238, N282, and N309. A disulfide bridge connects residues C281 and C306. 9 LRR repeats span residues 352–373 (SLKK…FQLP), 374–395 (SLQY…SHAD), 400–422 (NLKH…MGLE), 423–444 (KLEH…SVFL), 448–469 (NLRY…IFTG), 472–495 (SLKT…FTEL), 497–518 (NLTV…AFHS), 521–542 (SLQV…LYEP), and 545–568 (LLRI…QNLP). C390 and C391 form a disulfide bridge. Residues N497 and N526 are each glycosylated (N-linked (GlcNAc...) asparagine). N-linked (GlcNAc...) asparagine glycosylation is found at N570 and N575. The LRRCT domain occupies 579–630 (NAFACVCEHQRFLQWVKDQRQLLVGAEQMMCAEPLDMKDMPVLSFRNATCQM). 2 cysteine pairs are disulfide-bonded: C583/C609 and C585/C628. N-linked (GlcNAc...) asparagine glycosylation is present at N625. The chain crosses the membrane as a helical span at residues 633-653 (MIISVSVVTVLLVSVVGVLVY). Over 654 to 841 (KFYFHLMLLA…TNPQEATTST (188 aa)) the chain is Cytoplasmic. The TIR domain maps to 673 to 816 (STYGAFVIYS…VFWRRLRKAL (144 aa)). The segment at 820–841 (KPQSPEGTADAETNPQEATTST) is disordered. Positions 830–841 (AETNPQEATTST) are enriched in polar residues.

It belongs to the Toll-like receptor family. As to quaternary structure, belongs to the lipopolysaccharide (LPS) receptor, a multi-protein complex containing at least CD14, LY96 and TLR4. Binding to bacterial LPS leads to homodimerization. Interacts with LY96 via the extracellular domain. Interacts with MYD88 and TIRAP via their respective TIR domains. Interacts with TICAM2. Interacts with NOX4. Interacts with CNPY3 and HSP90B1; this interaction is required for proper folding in the endoplasmic reticulum. Interacts with MAP3K21; this interaction leads to negative regulation of TLR4 signaling. Interacts with CD36, following CD36 stimulation by oxLDL or amyloid-beta 42, and forms a heterodimer with TLR6. The trimeric complex is internalized and triggers inflammatory response. LYN kinase activity facilitates TLR4-TLR6 heterodimerization and signal initiation. Interacts with TICAM1 in response to LPS in a WDFY1-dependent manner. Interacts with WDFY1 in response to LPS. Interacts with SMPDL3B. Interacts with CEACAM1; upon lipopolysaccharide stimulation, forms a complex including TLR4 and the phosphorylated form of SYK and CEACAM1, which in turn, recruits PTPN6 that dephosphorylates SYK, reducing the production of reactive oxygen species (ROS) and lysosome disruption, which in turn, reduces the activity of the inflammasome. Interacts with RFTN1; the interaction occurs in response to lipopolysaccharide stimulation. Interacts with SCIMP; the interaction occurs in response to lipopolysaccharide stimulation and is enhanced by phosphorylation of SCIMP by LYN. This interaction facilitates the phosphorylation of TLR4 by LYN which elicits a selective cytokine response in macrophages. Interacts with TRAF3IP3. Interacts with TREM1; this interaction enhances TLR4-mediated inflammatory response. Interacts with ZG16B/PAUF. Interacts with CD82; this interaction inhibits TLR4-mediated signaling pathway. In terms of processing, phosphorylated on tyrosine residues by LYN after binding lipopolysaccharide. Ubiquitinated by RNF128 via 'Lys-28'-linked polyubiquitin chains, leading to proteasomal degradation.

Its subcellular location is the cell membrane. It localises to the early endosome. The protein localises to the cell projection. The protein resides in the ruffle. Its function is as follows. Transmembrane receptor that functions as a pattern recognition receptor recognizing pathogen- and damage-associated molecular patterns (PAMPs and DAMPs) to induce innate immune responses via downstream signaling pathways. At the plasma membrane, cooperates with LY96 to mediate the innate immune response to bacterial lipopolysaccharide (LPS). Also involved in LPS-independent inflammatory responses triggered by free fatty acids, such as palmitate, and Ni(2+). Mechanistically, acts via MYD88, TIRAP and TRAF6, leading to NF-kappa-B activation, cytokine secretion and the inflammatory response. Alternatively, CD14-mediated TLR4 internalization via endocytosis is associated with the initiation of a MYD88-independent signaling via the TICAM1-TBK1-IRF3 axis leading to type I interferon production. In addition to the secretion of proinflammatory cytokines, initiates the activation of NLRP3 inflammasome and formation of a positive feedback loop between autophagy and NF-kappa-B signaling cascade. In complex with TLR6, promotes inflammation in monocytes/macrophages by associating with TLR6 and the receptor CD86. Upon ligand binding, such as oxLDL or amyloid-beta 42, the TLR4:TLR6 complex is internalized and triggers inflammatory response, leading to NF-kappa-B-dependent production of CXCL1, CXCL2 and CCL9 cytokines, via MYD88 signaling pathway, and CCL5 cytokine, via TICAM1 signaling pathway. In myeloid dendritic cells, vesicular stomatitis virus glycoprotein G but not LPS promotes the activation of IRF7, leading to type I IFN production in a CD14-dependent manner. The protein is Toll-like receptor 4 (TLR4) of Boselaphus tragocamelus (Nilgai).